Here is a 394-residue protein sequence, read N- to C-terminus: MATAQLQRTSMSALVFPNKISTEQQSLVLVKRLLAVSVSCITYLRGIFPECAYGTRYLDDLCVKILREDKNCPGSTQLVKWMLGCYDALQKKYLRMVVLAVYTNPEDPQTISECYQFKFKYTSNGPIMDFISKNQSSESSMSSADTKKASILLIRKIYILMQNLGPLPNDVCLTMKLFYYDEVTPPDYQPPGFKDGDCEGVIFEGEPMYLNVGEVPTPFHTFKVKVTTEKERMENIYSGILSPKQIKTPLQKILMDKDDLEDEQEHYINDDFDIETKMEEQKKKLGSSELGEPNLVCEEDEIMRSKESPELSISHSQVEQLVSKTSELDVSESKTRSGKIFQNKMANGNQQIKSKESRKRSQLESGKTVLHHFDSSSQDSVPKRRKFSEPKEHI.

Positions 24 to 226 (QQSLVLVKRL…TPFHTFKVKV (203 aa)) constitute an HORMA domain. Residues 306-394 (KESPELSISH…RKFSEPKEHI (89 aa)) form a disordered region. The segment covering 311-325 (LSISHSQVEQLVSKT) has biased composition (polar residues). Residues 353–362 (KSKESRKRSQ) show a composition bias toward basic and acidic residues. Ser-376 is modified (phosphoserine). Residues 383–386 (KRRK) carry the Nuclear localization signal motif.

Interacts with HORMAD2. Interacts with IHO1. Phosphorylated at Ser-377 in a SPO11-dependent manner.

Its subcellular location is the nucleus. The protein localises to the chromosome. Plays a key role in meiotic progression. Regulates 3 different functions during meiosis: ensures that sufficient numbers of processed DNA double-strand breaks (DSBs) are available for successful homology search by increasing the steady-state numbers of single-stranded DSB ends. Promotes synaptonemal-complex formation independently of its role in homology search. Plays a key role in the male mid-pachytene checkpoint and the female meiotic prophase checkpoint: required for efficient build-up of ATR activity on unsynapsed chromosome regions, a process believed to form the basis of meiotic silencing of unsynapsed chromatin (MSUC) and meiotic prophase quality control in both sexes. The chain is HORMA domain-containing protein 1 (HORMAD1) from Sus scrofa (Pig).